Consider the following 719-residue polypeptide: Transcription factor E4F1 (719 aa).

Residues 20–63 (NIITIQTTLGDEDEDIHKCGKCLAEFSALDAFIQHKLSRSCKRT) form a required for ubiquitin ligase activity region. The segment at 59-125 (SCKRTQDPQT…SEDESSSPSK (67 aa)) is disordered. Basic and acidic residues predominate over residues 98 to 109 (EKQDAKVASGDK). Positions 128-207 (WKLNTEGRYV…GLAFRESGAL (80 aa)) are mediates dimerization and DNA-binding. 2 C2H2-type zinc fingers span residues 136-158 (YVCD…MFTH) and 164-186 (FVCE…KRRH). The segment at 192–216 (YRCNQCGLAFRESGALTRHLKSLTP) adopts a C2H2-type 3; degenerate zinc-finger fold. C2H2-type zinc fingers lie at residues 365 to 387 (YKCP…VKGH), 393 to 415 (FKCL…METH), 421 to 443 (YKCG…MRAH), 449 to 471 (YHCS…HRTH), and 477 to 499 (YVCQ…IRHH). A C2H2-type 9; degenerate zinc finger spans residues 505 to 527 (FKCSKCGRGFAEHGTLNRHLRAK).

Its subcellular location is the nucleus. It localises to the nucleoplasm. It is found in the cytoplasm. It carries out the reaction S-ubiquitinyl-[E2 ubiquitin-conjugating enzyme]-L-cysteine + [acceptor protein]-L-lysine = [E2 ubiquitin-conjugating enzyme]-L-cysteine + N(6)-ubiquitinyl-[acceptor protein]-L-lysine.. The protein operates within protein modification; protein ubiquitination. Functionally, may function as a transcriptional repressor. May also function as a ubiquitin ligase. Functions in cell survival and proliferation through control of the cell cycle. This is Transcription factor E4F1 (e4f1) from Danio rerio (Zebrafish).